A 222-amino-acid polypeptide reads, in one-letter code: Interleukin-12 subunit alpha (222 aa).

A signal peptide spans Met-1–Ala-25. Cystine bridges form between Cys-40–Cys-113, Cys-67–Cys-199, and Cys-88–Cys-126. Residues Asn-42, Asn-96, and Asn-110 are each glycosylated (N-linked (GlcNAc...) asparagine).

The protein belongs to the IL-6 superfamily. Heterodimer with IL12B; disulfide-linked. This heterodimer is known as interleukin IL-12. Heterodimer with EBI3/IL27B; not disulfide-linked. This heterodimer is known as interleukin IL-35. Interacts with NBR1; this interaction promotes IL-12 secretion.

The protein localises to the secreted. In terms of biological role, heterodimerizes with IL12B to form the IL-12 cytokine or with EBI3/IL27B to form the IL-35 cytokine. IL-12 is primarily produced by professional antigen-presenting cells (APCs) such as B-cells and dendritic cells (DCs) as well as macrophages and granulocytes and regulates T-cell and natural killer-cell responses, induces the production of interferon-gamma (IFN-gamma), favors the differentiation of T-helper 1 (Th1) cells and is an important link between innate resistance and adaptive immunity. Mechanistically, exerts its biological effects through a receptor composed of IL12R1 and IL12R2 subunits. Binding to the receptor results in the rapid tyrosine phosphorylation of a number of cellular substrates including the JAK family kinases TYK2 and JAK2. In turn, recruited STAT4 gets phosphorylated and translocates to the nucleus where it regulates cytokine/growth factor responsive genes. As part of IL-35, plays essential roles in maintaining the immune homeostasis of the liver microenvironment and also functions as an immune-suppressive cytokine. Mediates biological events through unconventional receptors composed of IL12RB2 and gp130/IL6ST heterodimers or homodimers. Signaling requires the transcription factors STAT1 and STAT4, which form a unique heterodimer that binds to distinct DNA sites. The chain is Interleukin-12 subunit alpha (IL12A) from Canis lupus familiaris (Dog).